We begin with the raw amino-acid sequence, 567 residues long: Pyrethroid hydrolase Ces2e (567 aa).

Positions 1–36 are cleaved as a signal peptide; it reads MAQTRAWKSIMPLESLPGWLNAVVWGLLLLFCQVQG. Pyrrolidone carboxylic acid is present on Gln-37. A disulfide bridge connects residues Cys-105 and Cys-132. Ser-237 (acyl-ester intermediate) is an active-site residue. A disulfide bond links Cys-289 and Cys-300. Catalysis depends on charge relay system residues Glu-354 and His-465.

It belongs to the type-B carboxylesterase/lipase family. As to expression, expressed in liver.

It is found in the microsome. It carries out the reaction all-trans-retinyl hexadecanoate + H2O = all-trans-retinol + hexadecanoate + H(+). The catalysed reaction is (-)-trans-permethrin + H2O = (3-phenoxyphenyl)methanol + (1S,3R)-3-(2,2-dichlorovinyl)-2,2-dimethylcyclopropanecarboxylate + H(+). Its function is as follows. Carboxylesterase that catalyzes the hydrolysis of pyrethroids pesticides. Hydrolyzes trans-permethrin at a rate about 22-fold higher than cis-permethrin. Also hydrolyzes trans-cypermethrin. Hydrolyzes retinyl esters. This is Pyrethroid hydrolase Ces2e from Rattus norvegicus (Rat).